The following is a 558-amino-acid chain: Polysialic acid transport protein KpsD (558 aa).

The N-terminal stretch at Met1–Ala20 is a signal peptide.

To E.coli K5 KpsD.

Its subcellular location is the periplasm. Functionally, involved in the translocation of the polysialic acid capsule across the outer membrane to the cell surface. May function as the periplasmic binding element of the PSA transport system, in which it transiently interacts with the membrane component of the transporter, binds polysaccharide and transports the polymer to a component in the outer membrane. This chain is Polysialic acid transport protein KpsD (kpsD), found in Escherichia coli.